The sequence spans 1578 residues: Neurexin-3 (1578 aa).

Residues 1-27 (MSFTLHSVFFTLKVSSFLGSLVGLCLG) form the signal peptide. Positions 28–202 (LEFMGLPNQW…SVQLEAEGPC (175 aa)) constitute a Laminin G-like 1 domain. The Extracellular portion of the chain corresponds to 28 to 1503 (LEFMGLPNQW…EVIRESNSTT (1476 aa)). N-linked (GlcNAc...) asparagine glycosylation is found at asparagine 58 and asparagine 105. The region spanning 198–235 (AEGPCGERPCENGGICFLLDGHPTCDCSTTGYGGTLCS) is the EGF-like 1 domain. Intrachain disulfides connect cysteine 202-cysteine 213, cysteine 207-cysteine 222, and cysteine 224-cysteine 234. 2 Laminin G-like domains span residues 260–444 (ENVA…VFKC) and 451–643 (DPIN…KSSC). The Ca(2+) site is built by aspartate 308, leucine 325, and methionine 378. Intrachain disulfides connect cysteine 408/cysteine 444, cysteine 614/cysteine 643, cysteine 651/cysteine 662, cysteine 656/cysteine 671, and cysteine 673/cysteine 683. The region spanning 647–684 (SAKQCDSYPCKNNAVCKDGWNRFICDCTGTGYWGRTCE) is the EGF-like 2 domain. Laminin G-like domains lie at 689 to 861 (ILSY…IDYC) and 875 to 1050 (DPVT…DRGC). The Ca(2+) site is built by aspartate 736 and leucine 753. An N-linked (GlcNAc...) asparagine glycan is attached at asparagine 761. Arginine 811 contacts Ca(2+). Disulfide bonds link cysteine 1022/cysteine 1050, cysteine 1057/cysteine 1068, cysteine 1062/cysteine 1077, and cysteine 1079/cysteine 1089. In terms of domain architecture, EGF-like 3 spans 1053–1090 (PSTTCQEDSCANQGVCMQQWEGFTCDCSMTSYSGNQCN). Residues 1094–1294 (ATYIFGKSGG…NPNIKINGSV (201 aa)) form the Laminin G-like 6 domain. Residues aspartate 1146 and isoleucine 1163 each contribute to the Ca(2+) site. Asparagine 1193 carries N-linked (GlcNAc...) asparagine glycosylation. Ca(2+)-binding residues include isoleucine 1245 and asparagine 1247. N-linked (GlcNAc...) asparagine glycans are attached at residues asparagine 1291 and asparagine 1335. Residues 1328–1352 (ATTTTRKNRSTASIQPTSDDLVSSA) form a disordered region. Polar residues predominate over residues 1337-1352 (STASIQPTSDDLVSSA). The O-linked (Xyl...) (heparan sulfate) serine glycan is linked to serine 1351. N-linked (GlcNAc...) asparagine glycosylation occurs at asparagine 1500. A helical transmembrane segment spans residues 1504 to 1524 (GMVVGIVAAAALCILILLYAM). Residues 1525-1578 (YKYRNRDEGSYQVDETRNYISNSAQSNGTLMKEKQASSKSGHKKQKNKDKEYYV) are Cytoplasmic-facing. Positions 1546-1578 (NSAQSNGTLMKEKQASSKSGHKKQKNKDKEYYV) are disordered.

It belongs to the neurexin family. The laminin G-like domain 2 binds to NXPH1. Isoform 8/alpha-4B binds to alpha-dystroglycan. The cytoplasmic C-terminal region binds to CASK. Specific isoforms bind neuroligins NLGN1, NLGN2 and NLGN3. Interacts with CLSTN3. In terms of processing, O-glycosylated; contains heparan sulfate. Heparan sulfate attachment is required for synapse development by mediating interactions with neuroligins. Brain.

Its subcellular location is the presynaptic cell membrane. Its function is as follows. Neuronal cell surface protein that may be involved in cell recognition and cell adhesion. May mediate intracellular signaling. In Rattus norvegicus (Rat), this protein is Neurexin-3 (Nrxn3).